The chain runs to 386 residues: Chaperone protein DnaJ (386 aa).

The J domain maps to 3–68; it reads DYYEILEVAR…KKRQVYDRYG (66 aa). The segment at 146-224 adopts a CR-type zinc-finger fold; that stretch reads GVDKELVISN…CKGQGAVKEK (79 aa). 8 residues coordinate Zn(2+): Cys-159, Cys-162, Cys-176, Cys-179, Cys-198, Cys-201, Cys-212, and Cys-215. CXXCXGXG motif repeat units follow at residues 159–166, 176–183, 198–205, and 212–219; these read CNVCNGKG, CSECKGRG, CPKCHGEG, and CKNCKGQG.

It belongs to the DnaJ family. Homodimer. The cofactor is Zn(2+).

It is found in the cytoplasm. In terms of biological role, participates actively in the response to hyperosmotic and heat shock by preventing the aggregation of stress-denatured proteins and by disaggregating proteins, also in an autonomous, DnaK-independent fashion. Unfolded proteins bind initially to DnaJ; upon interaction with the DnaJ-bound protein, DnaK hydrolyzes its bound ATP, resulting in the formation of a stable complex. GrpE releases ADP from DnaK; ATP binding to DnaK triggers the release of the substrate protein, thus completing the reaction cycle. Several rounds of ATP-dependent interactions between DnaJ, DnaK and GrpE are required for fully efficient folding. Also involved, together with DnaK and GrpE, in the DNA replication of plasmids through activation of initiation proteins. The chain is Chaperone protein DnaJ from Protochlamydia amoebophila (strain UWE25).